Reading from the N-terminus, the 464-residue chain is Serine--tRNA synthetase-like protein Slimp (464 aa).

It belongs to the class-II aminoacyl-tRNA synthetase family. Type-1 seryl-tRNA synthetase subfamily.

It localises to the mitochondrion. Functionally, essential protein which may play a role in mitochondrial morphogenesis and function. Has transfer RNA (tRNA)-binding activity and can bind tRNA(Ser) but does not have serine--tRNA ligase activity and does not bind ATP. The chain is Serine--tRNA synthetase-like protein Slimp from Drosophila melanogaster (Fruit fly).